We begin with the raw amino-acid sequence, 249 residues long: Protein YIPF4 (249 aa).

Pro residues predominate over residues 1-15; that stretch reads MQPPGPQQPPPPPLF. The segment at 1–40 is disordered; sequence MQPPGPQQPPPPPLFTPNNGDFTFVSSADAEDPSGSITTP. The Cytoplasmic segment spans residues 1–116; sequence MQPPGPQQPP…LGFNRQVVRD (116 aa). The segment covering 16 to 26 has biased composition (polar residues); sequence TPNNGDFTFVS. Residues 117–137 form a helical membrane-spanning segment; that stretch reads NPDFWGPLAVVLFFSMISLYG. Position 138 (Gln138) is a topological domain, lumenal. The helical transmembrane segment at 139-159 threads the bilayer; that stretch reads FKVVSWIITIWIFGSLTIFLL. Over 160–171 the chain is Cytoplasmic; sequence ARVLGGEVAYGQ. The helical transmembrane segment at 172 to 192 threads the bilayer; that stretch reads VLGVIGYSLLPLIVIAPVLLV. The Lumenal portion of the chain corresponds to 193-200; sequence VGSFEVVS. Residues 201-221 traverse the membrane as a helical segment; sequence TLIKLFGVFWAAYSAASLLVG. At 222–228 the chain is on the cytoplasmic side; sequence EEFKTKK. A helical transmembrane segment spans residues 229-249; it reads PLLIYPIFLLYIYFLSLYTGV.

Belongs to the YIP1 family.

The protein localises to the golgi apparatus. It localises to the cis-Golgi network membrane. In terms of biological role, involved in the maintenance of the Golgi structure. The sequence is that of Protein YIPF4 (YIPF4) from Gallus gallus (Chicken).